Consider the following 484-residue polypeptide: Carbohydrate sulfotransferase 7 (484 aa).

Over 1–12 (MKGRRRRRREYC) the chain is Cytoplasmic. Residues 13 to 33 (KFTLLLALYTLLLLLVPSVLD) form a helical; Signal-anchor for type II membrane protein membrane-spanning segment. Topologically, residues 34 to 484 (SHSEQDKGRN…PLETKANWAV (451 aa)) are lumenal. The disordered stretch occupies residues 71–90 (RSLAEGNPDRSPGSPGNLSA). N-linked (GlcNAc...) asparagine glycosylation is present at Asn87. 108–114 (WRTGSSF) is a 3'-phosphoadenylyl sulfate binding site. N-linked (GlcNAc...) asparagine glycosylation is present at Asn184. 276-284 (RDPRAVHNS) contacts 3'-phosphoadenylyl sulfate. A glycan (N-linked (GlcNAc...) asparagine) is linked at Asn405. Ser460 is subject to Phosphoserine. A compositionally biased stretch (basic and acidic residues) spans 460–473 (SGDERDRKTVREGE). Residues 460 to 484 (SGDERDRKTVREGETPLETKANWAV) are disordered.

This sequence belongs to the sulfotransferase 1 family. Gal/GlcNAc/GalNAc subfamily. Widely expressed. Highly expressed in kidney. Expressed at lower level in heart, lung and liver.

Its subcellular location is the golgi apparatus membrane. The enzyme catalyses chondroitin beta-D-glucuronate + n 3'-phosphoadenylyl sulfate = chondroitin 6'-sulfate + n adenosine 3',5'-bisphosphate + n H(+). Its function is as follows. Sulfotransferase that utilizes 3'-phospho-5'-adenylyl sulfate (PAPS) as sulfonate donor to catalyze the transfer of sulfate to position 6 of non-reducing N-acetylglucosamine (GlcNAc) residues. Preferentially acts on mannose-linked GlcNAc. Also able to catalyze the transfer of sulfate to position 6 of the N-acetylgalactosamine (GalNAc) residue of chondroitin. Also acts on core 2 mucin-type oligosaccharide and N-acetyllactosamine oligomer with a lower efficiency. Has weak or no activity toward keratan sulfate and oligosaccharides containing the Galbeta1-4GlcNAc. Catalyzes 6-O-sulfation of beta-benzyl GlcNAc but not alpha- or beta-benzyl GalNAc. This Mus musculus (Mouse) protein is Carbohydrate sulfotransferase 7 (Chst7).